Here is a 365-residue protein sequence, read N- to C-terminus: MQTLKVDLGERSYPIYIGEGLLDQPELLAPHIAGRQIAIVSNETVAPLYLERLSKALGAYSVLPVILPDGEAHKNWETLQLIFDGLLTARHDRRTTVVALGGGVIGDMAGFAAACYQRGVDFIQVPTTLLSQVDSSVGGKTGINHPLGKNMVGAFYQPNAVLIDTTTLNTLPERELSAGLAEVIKYGLICDKPFLGWLEDNIKALRALEPAALTEAIQRSCAAKAAVVGADERESGVRATLNLGHTFGHAIETHMGYGVWLHGEAVAAGTVMALEMSMRLGWIDQSERDRAIRLLQDAGLPVVPPQEMTPAHFMEHMAVDKKVIDGRLRLVLLRQMGEAVVTDDYPKEILQATLSADYRAIVAQL.

Residues 69–74 (DGEAHK), 103–107 (GVIGD), 127–128 (TT), Lys140, Lys149, and 167–170 (TLNT) contribute to the NAD(+) site. Zn(2+) contacts are provided by Glu182, His245, and His262.

Belongs to the sugar phosphate cyclases superfamily. Dehydroquinate synthase family. Requires Co(2+) as cofactor. Zn(2+) is required as a cofactor. It depends on NAD(+) as a cofactor.

It localises to the cytoplasm. The catalysed reaction is 7-phospho-2-dehydro-3-deoxy-D-arabino-heptonate = 3-dehydroquinate + phosphate. It participates in metabolic intermediate biosynthesis; chorismate biosynthesis; chorismate from D-erythrose 4-phosphate and phosphoenolpyruvate: step 2/7. Its function is as follows. Catalyzes the conversion of 3-deoxy-D-arabino-heptulosonate 7-phosphate (DAHP) to dehydroquinate (DHQ). The protein is 3-dehydroquinate synthase of Pseudomonas putida (strain W619).